The sequence spans 125 residues: Type II secretion system protein I (125 aa).

A propeptide spans 1-5 (MKQQG) (leader sequence). N-methylmethionine is present on Met-6. Residues 6 to 26 (MTLLEVMVALVIFALAGLTVL) form a helical membrane-spanning segment.

The protein belongs to the GSP I family. Type II secretion is composed of four main components: the outer membrane complex, the inner membrane complex, the cytoplasmic secretion ATPase and the periplasm-spanning pseudopilus. Interacts with core component OutG. Cleaved by prepilin peptidase. Post-translationally, methylated by prepilin peptidase at the amino group of the N-terminal methionine once the leader sequence is cleaved by prepilin peptidase.

The protein localises to the cell inner membrane. Its function is as follows. Component of the type II secretion system required for the energy-dependent secretion of extracellular factors such as proteases and toxins from the periplasm. Part of the pseudopilus tip complex that is critical for the recognition and binding of secretion substrates. This chain is Type II secretion system protein I (outI), found in Dickeya chrysanthemi (Pectobacterium chrysanthemi).